A 371-amino-acid polypeptide reads, in one-letter code: Bifunctional enzyme IspD/IspF (371 aa).

The segment at 1-212 is 2-C-methyl-D-erythritol 4-phosphate cytidylyltransferase; the sequence is MKDITLVLLA…FDFTPASGTI (212 aa). Positions 213–371 are 2-C-methyl-D-erythritol 2,4-cyclodiphosphate synthase; it reads FTGNGFDVHA…NLGYFDWRKF (159 aa). The a divalent metal cation site is built by D219 and H221. Residues 219 to 221 and 245 to 246 contribute to the 4-CDP-2-C-methyl-D-erythritol 2-phosphate site; these read DVH and HS. H253 contacts a divalent metal cation. Residues 267 to 269, 272 to 276, 341 to 344, F348, and R351 each bind 4-CDP-2-C-methyl-D-erythritol 2-phosphate; these read DIG, FPDTD, and STTE.

The protein in the N-terminal section; belongs to the IspD/TarI cytidylyltransferase family. IspD subfamily. This sequence in the C-terminal section; belongs to the IspF family. A divalent metal cation serves as cofactor.

The catalysed reaction is 2-C-methyl-D-erythritol 4-phosphate + CTP + H(+) = 4-CDP-2-C-methyl-D-erythritol + diphosphate. The enzyme catalyses 4-CDP-2-C-methyl-D-erythritol 2-phosphate = 2-C-methyl-D-erythritol 2,4-cyclic diphosphate + CMP. It participates in isoprenoid biosynthesis; isopentenyl diphosphate biosynthesis via DXP pathway; isopentenyl diphosphate from 1-deoxy-D-xylulose 5-phosphate: step 2/6. The protein operates within isoprenoid biosynthesis; isopentenyl diphosphate biosynthesis via DXP pathway; isopentenyl diphosphate from 1-deoxy-D-xylulose 5-phosphate: step 4/6. Its function is as follows. Bifunctional enzyme that catalyzes the formation of 4-diphosphocytidyl-2-C-methyl-D-erythritol from CTP and 2-C-methyl-D-erythritol 4-phosphate (MEP) (IspD), and catalyzes the conversion of 4-diphosphocytidyl-2-C-methyl-D-erythritol 2-phosphate (CDP-ME2P) to 2-C-methyl-D-erythritol 2,4-cyclodiphosphate (ME-CPP) with a corresponding release of cytidine 5-monophosphate (CMP) (IspF). The sequence is that of Bifunctional enzyme IspD/IspF from Campylobacter hominis (strain ATCC BAA-381 / DSM 21671 / CCUG 45161 / LMG 19568 / NCTC 13146 / CH001A).